The following is a 206-amino-acid chain: Thymidylate kinase (206 aa).

ATP is bound at residue 7–14; it reads GGEGSGKS.

Belongs to the thymidylate kinase family.

The enzyme catalyses dTMP + ATP = dTDP + ADP. Phosphorylation of dTMP to form dTDP in both de novo and salvage pathways of dTTP synthesis. The protein is Thymidylate kinase (tmk) of Chlamydia pneumoniae (Chlamydophila pneumoniae).